The sequence spans 382 residues: 1-deoxy-D-xylulose 5-phosphate reductoisomerase (382 aa).

Residues T10, G11, S12, I13, G36, and N122 each contribute to the NADPH site. Residue K123 participates in 1-deoxy-D-xylulose 5-phosphate binding. Residue E124 coordinates NADPH. Position 148 (D148) interacts with Mn(2+). 1-deoxy-D-xylulose 5-phosphate contacts are provided by S149, E150, S174, and H197. Residue E150 coordinates Mn(2+). G203 contributes to the NADPH binding site. Residues S210, N215, K216, and E219 each contribute to the 1-deoxy-D-xylulose 5-phosphate site. A Mn(2+)-binding site is contributed by E219.

This sequence belongs to the DXR family. It depends on Mg(2+) as a cofactor. Requires Mn(2+) as cofactor.

It catalyses the reaction 2-C-methyl-D-erythritol 4-phosphate + NADP(+) = 1-deoxy-D-xylulose 5-phosphate + NADPH + H(+). It functions in the pathway isoprenoid biosynthesis; isopentenyl diphosphate biosynthesis via DXP pathway; isopentenyl diphosphate from 1-deoxy-D-xylulose 5-phosphate: step 1/6. In terms of biological role, catalyzes the NADPH-dependent rearrangement and reduction of 1-deoxy-D-xylulose-5-phosphate (DXP) to 2-C-methyl-D-erythritol 4-phosphate (MEP). In Chlorobium chlorochromatii (strain CaD3), this protein is 1-deoxy-D-xylulose 5-phosphate reductoisomerase.